The primary structure comprises 123 residues: Histone H2B (123 aa).

The interval 1 to 30 (MPPKTSGKAAKKAGKAQKNITKTDKKKKRR) is disordered. Pro2 bears the N-methylproline; partial mark. Lys44 is subject to N6-succinyllysine. Ser110 is a glycosylation site (O-linked (GlcNAc) serine). Lys114 and Lys118 each carry N6-succinyllysine. Residue Lys118 forms a Glycyl lysine isopeptide (Lys-Gly) (interchain with G-Cter in ubiquitin) linkage.

The protein belongs to the histone H2B family. In terms of assembly, the nucleosome is a histone octamer containing two molecules each of H2A, H2B, H3 and H4 assembled in one H3-H4 heterotetramer and two H2A-H2B heterodimers. The octamer wraps approximately 147 bp of DNA. In terms of processing, phosphorylated by the catalytic component of the Dbf4-dependent kinase (DDK) complex Cdc7. Monoubiquitination of Lys-118 by Bre1 gives a specific tag for epigenetic transcriptional activation and is also prerequisite for histone H3 'Lys-4' and 'Lys-79' methylation. Deubiquitination of Lys-118 by the SAGA complex is involved in activating transcription of a large subset of genes. Post-translationally, methylation at Pro-2 increases upon heat shock. In terms of processing, glcNAcylation at Ser-110 promotes monoubiquitination of Lys-118. It fluctuates in response to extracellular glucose, and associates with transcribed genes.

Its subcellular location is the nucleus. The protein localises to the chromosome. Its function is as follows. Core component of nucleosome. Nucleosomes wrap and compact DNA into chromatin, limiting DNA accessibility to the cellular machineries which require DNA as a template. Histones thereby play a central role in transcription regulation, DNA repair, DNA replication and chromosomal stability. DNA accessibility is regulated via a complex set of post-translational modifications of histones, also called histone code, and nucleosome remodeling. This chain is Histone H2B (His2B), found in Drosophila yakuba (Fruit fly).